The primary structure comprises 138 residues: Phosphoribosyl-AMP cyclohydrolase (138 aa).

Residue Asp84 participates in Mg(2+) binding. Zn(2+) is bound at residue Cys85. Mg(2+)-binding residues include Asp86 and Asp88. 2 residues coordinate Zn(2+): Cys102 and Cys109.

Belongs to the PRA-CH family. As to quaternary structure, homodimer. Mg(2+) is required as a cofactor. Zn(2+) serves as cofactor.

The protein resides in the cytoplasm. The catalysed reaction is 1-(5-phospho-beta-D-ribosyl)-5'-AMP + H2O = 1-(5-phospho-beta-D-ribosyl)-5-[(5-phospho-beta-D-ribosylamino)methylideneamino]imidazole-4-carboxamide. It participates in amino-acid biosynthesis; L-histidine biosynthesis; L-histidine from 5-phospho-alpha-D-ribose 1-diphosphate: step 3/9. In terms of biological role, catalyzes the hydrolysis of the adenine ring of phosphoribosyl-AMP. In Burkholderia lata (strain ATCC 17760 / DSM 23089 / LMG 22485 / NCIMB 9086 / R18194 / 383), this protein is Phosphoribosyl-AMP cyclohydrolase.